The sequence spans 242 residues: Zinc import ATP-binding protein ZnuC (242 aa).

The 218-residue stretch at I24–Y241 folds into the ABC transporter domain. Position 56–63 (G56–T63) interacts with ATP.

This sequence belongs to the ABC transporter superfamily. Zinc importer (TC 3.A.1.15.5) family. The complex is composed of two ATP-binding proteins (ZnuC), two transmembrane proteins (ZnuB) and a solute-binding protein (ZnuA).

Its subcellular location is the cell inner membrane. It carries out the reaction Zn(2+)(out) + ATP(in) + H2O(in) = Zn(2+)(in) + ADP(in) + phosphate(in) + H(+)(in). In terms of biological role, part of the ABC transporter complex ZnuABC involved in zinc import. Responsible for energy coupling to the transport system. The chain is Zinc import ATP-binding protein ZnuC from Ehrlichia canis (strain Jake).